Reading from the N-terminus, the 723-residue chain is CSC1-like protein ERD4 (723 aa).

The Cytoplasmic segment spans residues 1 to 5; that stretch reads MEFAS. The helical transmembrane segment at 6–26 threads the bilayer; that stretch reads FLVSLGTSAIIFVVLMFLFTW. Topologically, residues 27-90 are extracellular; the sequence is LSRRPGNVPV…TAVYFVFQST (64 aa). The chain crosses the membrane as a helical span at residues 91–111; sequence VLGIFALSALLLLPTLLPIAA. The Cytoplasmic segment spans residues 112–148; it reads TDNNLETSRSATDTTSNGTFSQLDNLSMANITKSSSR. The chain crosses the membrane as a helical span at residues 149–169; sequence LWAFLGAVYWVSVVTYFMLWK. The Extracellular portion of the chain corresponds to 170–364; that stretch reads AYKHVAALRA…IKFFSRIVRQ (195 aa). Residues 365 to 385 form a helical membrane-spanning segment; that stretch reads YVIYFLVAITILFYMIPIAFV. The Cytoplasmic segment spans residues 386-416; sequence SAITTLANLQKALPFLKPIVDIAFIRTILES. Residues 417 to 437 form a helical membrane-spanning segment; the sequence is YLPQIALIVFLAMLPKFLMFL. Over 438 to 456 the chain is Extracellular; the sequence is SKSEGIPSQSHAIRATSGK. Residues 457-477 traverse the membrane as a helical segment; the sequence is YFYFSVLNVFIGVTLAGSLFE. The Cytoplasmic segment spans residues 478–508; that stretch reads NLKALEEKPNSFITLLATSLPKSATFFLTYV. Residues 509–529 traverse the membrane as a helical segment; that stretch reads ALKFFVGYGLELSRIIPLIIF. The Extracellular portion of the chain corresponds to 530–572; that stretch reads HLKKKYLCKTEAEVKEAWYPGDLSYATRVPSDMLILTITFCYS. A helical transmembrane segment spans residues 573–593; sequence VIAPLILVFGVIYFGLGWLIL. Residues 594–614 lie on the Cytoplasmic side of the membrane; the sequence is RNQALKVYVPSYESYGRMWPH. A helical membrane pass occupies residues 615-635; the sequence is IHTRILAALFLFQLVMFGYLG. The Extracellular segment spans residues 636–637; the sequence is VK. Residues 638–658 traverse the membrane as a helical segment; that stretch reads IFVWAILLVPLIFISLIFGYV. Topologically, residues 659–723 are cytoplasmic; sequence CRQKFYGGFE…YQDYAAISAA (65 aa).

It belongs to the CSC1 (TC 1.A.17) family.

The protein localises to the plastid. Its subcellular location is the chloroplast membrane. Acts as an osmosensitive calcium-permeable cation channel. The protein is CSC1-like protein ERD4 (ERD4) of Brassica juncea (Indian mustard).